The following is a 741-amino-acid chain: Multifunctional procollagen lysine hydroxylase and glycosyltransferase LH3 (741 aa).

A signal peptide spans 1–27 (MAASVPEPRLLLLLLLLLPPLPPVTSA). Residues 28 to 293 (SDRPRGANPV…FCNLNRRTLP (266 aa)) form a required for glycosyltransferase activity region. 47 to 49 (VAT) contacts UDP. Asn66 is a glycosylation site (N-linked (GlcNAc...) asparagine). Residues Asp115, Asp118, and His256 each coordinate Mn(2+). 115-117 (DSY) serves as a coordination point for UDP. 259 to 262 (GPTK) lines the UDP pocket. Intrachain disulfides connect Cys282/Cys285 and Cys382/Cys388. The accessory region stretch occupies residues 298 to 523 (PPRVLLAVFV…EFGRLLSTSH (226 aa)). N-linked (GlcNAc...) asparagine glycosylation occurs at Asn551. An intrachain disulfide couples Cys566 to Cys701. 2-oxoglutarate is bound by residues Arg602 and Tyr659. In terms of domain architecture, Fe2OG dioxygenase spans 650–741 (RAVMNFVVRY…RYIMVSFVDP (92 aa)). Fe cation is bound by residues His670 and Asp672. The segment at 675-718 (TFTLNVALNHKGVDYEGGGCRFLRYDCRVSSPRKGWALLHPGRL) is important for dimerization. Asn679 lines the 2-oxoglutarate pocket. Residue His722 coordinates Fe cation. Residue Arg732 participates in 2-oxoglutarate binding.

Homodimer. Requires Fe(2+) as cofactor. L-ascorbate serves as cofactor. Mn(2+) is required as a cofactor. Detected in heart and bone.

It is found in the rough endoplasmic reticulum. It localises to the endoplasmic reticulum lumen. The protein resides in the endoplasmic reticulum membrane. Its subcellular location is the secreted. The protein localises to the extracellular space. It catalyses the reaction L-lysyl-[collagen] + 2-oxoglutarate + O2 = (5R)-5-hydroxy-L-lysyl-[collagen] + succinate + CO2. The catalysed reaction is (5R)-5-hydroxy-L-lysyl-[collagen] + UDP-alpha-D-galactose = (5R)-5-O-(beta-D-galactosyl)-5-hydroxy-L-lysyl-[collagen] + UDP + H(+). The enzyme catalyses (5R)-5-O-(beta-D-galactosyl)-5-hydroxy-L-lysyl-[collagen] + UDP-alpha-D-glucose = (5R)-5-O-[alpha-D-glucosyl-(1-&gt;2)-beta-D-galactosyl]-5-hydroxy-L-lysyl-[collagen] + UDP + H(+). Multifunctional enzyme that catalyzes a series of post-translational modifications on Lys residues in procollagen. Plays a redundant role in catalyzing the formation of hydroxylysine residues in -Xaa-Lys-Gly- sequences in collagens. Plays a redundant role in catalyzing the transfer of galactose onto hydroxylysine groups, giving rise to galactosyl 5-hydroxylysine. Has an essential role by catalyzing the subsequent transfer of glucose moieties, giving rise to 1,2-glucosylgalactosyl-5-hydroxylysine residues. Catalyzes hydroxylation and glycosylation of Lys residues in the MBL1 collagen-like domain, giving rise to hydroxylysine and 1,2-glucosylgalactosyl-5-hydroxylysine residues. Catalyzes hydroxylation and glycosylation of Lys residues in the ADIPOQ collagen-like domain, giving rise to hydroxylysine and 1,2-glucosylgalactosyl-5-hydroxylysine residues. Essential for normal biosynthesis and secretion of type IV collagens. Essential for normal formation of basement membranes. This Rattus norvegicus (Rat) protein is Multifunctional procollagen lysine hydroxylase and glycosyltransferase LH3 (Plod3).